Consider the following 899-residue polypeptide: Nuclear factor NF-kappa-B p100 subunit (899 aa).

Ser23 and Ser161 each carry phosphoserine. The RHD domain occupies 35 to 224; the sequence is ADGPYLVIVE…QPIHDSKSPG (190 aa). Positions 337–341 match the Nuclear localization signal motif; sequence RKRRK. The segment at 346-377 is GRR; it reads FSQPFGGGSHMGGGSGGSAGGYGGAGGGGSLG. The segment at 403–434 is disordered; the sequence is GGAQMAGSRRDTDAGEGAEEPRTPPEAPQGEP. The span at 410-425 shows a compositional bias: basic and acidic residues; that stretch reads SRRDTDAGEGAEEPRT. Thr425 carries the post-translational modification Phosphothreonine. ANK repeat units lie at residues 487 to 516, 526 to 555, 559 to 590, 599 to 628, 633 to 663, and 667 to 696; these read NGDTPLHLAIIHGQTGVIEQIAHVIYHAQY, LHQTPLHLAVITGQTRVVSFLLQVGADPTL, HGDSALHLALRAGAAAPELLQALLRSGAHAVP, EGLYPVHLAVHARSPECLDLLVDCGAEVEA, GGRTALHLATEMEELGLVTHLVTKLHANVNA, and AGNTPLHLAAGLGSPTLTRLLLKAGADIHA. The tract at residues 698 to 734 is disordered; sequence NEEPLCPLPSPSTSGSDSDSEGPERDTQRNFRGHTPL. 3 positions are modified to phosphoserine: Ser713, Ser715, and Ser717. One copy of the ANK 7 repeat lies at 729-755; the sequence is RGHTPLDLTCSTKVKTLLLNAAQNTTE. Residues 764-851 enclose the Death domain; that stretch reads AGPGLSLGDA…EGVRLLKGPE (88 aa). At Ser812 the chain carries Phosphoserine. Residues 851–865 show a composition bias toward basic and acidic residues; sequence ETRDKLPSTEVKEDS. The tract at residues 851–899 is disordered; it reads ETRDKLPSTEVKEDSAYGSQSVEQEAEKLCPPPEPPGGLCHGHPQPQVH. Lys855 is covalently cross-linked (Glycyl lysine isopeptide (Lys-Gly) (interchain with G-Cter in ubiquitin)). A phosphoserine; by MAP3K14 mark is found at Ser865 and Ser869. Low complexity predominate over residues 887–899; sequence GGLCHGHPQPQVH.

In terms of assembly, component of the NF-kappa-B RelB-p52 complex. Homodimer; component of the NF-kappa-B p52-p52 complex. Component of the NF-kappa-B p65-p52 complex. Component of the NF-kappa-B p52-c-Rel complex. NFKB2/p52 interacts with NFKBIE. Component of a complex consisting of the NF-kappa-B p50-p50 homodimer and BCL3. Directly interacts with MEN1. Post-translationally, while translation occurs, the particular unfolded structure after the GRR repeat promotes the generation of p52 making it an acceptable substrate for the proteasome. This process is known as cotranslational processing. The processed form is active and the unprocessed form acts as an inhibitor (I kappa B-like), being able to form cytosolic complexes with NF-kappa B, trapping it in the cytoplasm. Complete folding of the region downstream of the GRR repeat precludes processing. Subsequent to MAP3K14-dependent serine phosphorylation, p100 polyubiquitination occurs then triggering its proteasome-dependent processing. In terms of processing, constitutive processing is tightly suppressed by its C-terminal processing inhibitory domain, named PID, which contains the death domain. Post-translationally, ubiquitinated by TRIM55; leading to processing by VCP and subsequent ubiquitin-dependent protein degradation by the proteasome. In terms of tissue distribution, highly expressed in lymph nodes and thymus.

It is found in the nucleus. The protein resides in the cytoplasm. In terms of biological role, NF-kappa-B is a pleiotropic transcription factor present in almost all cell types and is the endpoint of a series of signal transduction events that are initiated by a vast array of stimuli related to many biological processes such as inflammation, immunity, differentiation, cell growth, tumorigenesis and apoptosis. NF-kappa-B is a homo- or heterodimeric complex formed by the Rel-like domain-containing proteins RELA/p65, RELB, NFKB1/p105, NFKB1/p50, REL and NFKB2/p52. The dimers bind at kappa-B sites in the DNA of their target genes and the individual dimers have distinct preferences for different kappa-B sites that they can bind with distinguishable affinity and specificity. Different dimer combinations act as transcriptional activators or repressors, respectively. NF-kappa-B is controlled by various mechanisms of post-translational modification and subcellular compartmentalization as well as by interactions with other cofactors or corepressors. NF-kappa-B complexes are held in the cytoplasm in an inactive state complexed with members of the NF-kappa-B inhibitor (I-kappa-B) family. In a conventional activation pathway, I-kappa-B is phosphorylated by I-kappa-B kinases (IKKs) in response to different activators, subsequently degraded thus liberating the active NF-kappa-B complex which translocates to the nucleus. In a non-canonical activation pathway, the MAP3K14-activated CHUK/IKKA homodimer phosphorylates NFKB2/p100 associated with RelB, inducing its proteolytic processing to NFKB2/p52 and the formation of NF-kappa-B RelB-p52 complexes. The NF-kappa-B heterodimeric RelB-p52 complex is a transcriptional activator. The NF-kappa-B p52-p52 homodimer is a transcriptional repressor. NFKB2 appears to have dual functions such as cytoplasmic retention of attached NF-kappa-B proteins by p100 and generation of p52 by a cotranslational processing. The proteasome-mediated process ensures the production of both p52 and p100 and preserves their independent function. p52 binds to the kappa-B consensus sequence 5'-GGRNNYYCC-3', located in the enhancer region of genes involved in immune response and acute phase reactions. p52 and p100 are respectively the minor and major form; the processing of p100 being relatively poor. Isoform p49 is a subunit of the NF-kappa-B protein complex, which stimulates the HIV enhancer in synergy with p65. In concert with RELB, regulates the circadian clock by repressing the transcriptional activator activity of the CLOCK-BMAL1 heterodimer. The chain is Nuclear factor NF-kappa-B p100 subunit (Nfkb2) from Mus musculus (Mouse).